Here is a 221-residue protein sequence, read N- to C-terminus: Penicillin-binding protein activator LpoB (221 aa).

A signal peptide spans 1 to 20; the sequence is MLNRMYRYALLATVALALSG. Residue Cys21 is the site of N-palmitoyl cysteine attachment. Residue Cys21 is the site of S-diacylglycerol cysteine attachment. A disordered region spans residues 29–82; the sequence is PAPVEEAQPGTQQPTQPVPPPTQPVPTVPSVPSIPAQPGPIEHQPENATPEPKA. Residues 44–57 show a composition bias toward pro residues; the sequence is QPVPPPTQPVPTVP.

This sequence belongs to the LpoB family. In terms of assembly, interacts with PBP1b.

It localises to the cell outer membrane. Functionally, regulator of peptidoglycan synthesis that is essential for the function of penicillin-binding protein 1B (PBP1b). The sequence is that of Penicillin-binding protein activator LpoB from Cronobacter turicensis (strain DSM 18703 / CCUG 55852 / LMG 23827 / z3032).